The sequence spans 317 residues: tRNA-dihydrouridine(16) synthase (317 aa).

Residues 7–9 and Q68 contribute to the FMN site; that span reads PME. Catalysis depends on C98, which acts as the Proton donor. Residues K139, 199–201, and 223–224 contribute to the FMN site; these read NGE and GR.

Belongs to the Dus family. DusC subfamily. The cofactor is FMN.

It carries out the reaction 5,6-dihydrouridine(16) in tRNA + NADP(+) = uridine(16) in tRNA + NADPH + H(+). The enzyme catalyses 5,6-dihydrouridine(16) in tRNA + NAD(+) = uridine(16) in tRNA + NADH + H(+). Its function is as follows. Catalyzes the synthesis of 5,6-dihydrouridine (D), a modified base found in the D-loop of most tRNAs, via the reduction of the C5-C6 double bond in target uridines. Specifically modifies U16 in tRNAs. The sequence is that of tRNA-dihydrouridine(16) synthase from Pseudomonas syringae pv. tomato (strain ATCC BAA-871 / DC3000).